A 41-amino-acid polypeptide reads, in one-letter code: Large ribosomal subunit protein bL36 (41 aa).

Belongs to the bacterial ribosomal protein bL36 family.

This Methylobacterium nodulans (strain LMG 21967 / CNCM I-2342 / ORS 2060) protein is Large ribosomal subunit protein bL36.